The chain runs to 597 residues: Kelch-like protein 21 (597 aa).

One can recognise a BTB domain in the interval 35–103; it reads LDVTLEAAGG…SYTGRVAVSG (69 aa). Residues 138–239 form the BACK domain; sequence CLDMQDFAEA…RRFYLLAHVE (102 aa). Kelch repeat units follow at residues 287-335, 336-382, 384-422, 423-470, 472-512, and 513-560; these read ILVL…ALGN, DIYV…VLDG, LYVV…ACRG, RLYA…TLNG, MYFV…VLGG, and KLYV…SIFR. The interval 570–597 is disordered; sequence GRGFELNSGSNDVDAGYHRLPQNPEELH.

Component of the BCR(KLHL21) E3 ubiquitin ligase complex, at least composed of CUL3, KLHL21 and RBX1.

It is found in the cytoplasm. Its subcellular location is the cytoskeleton. The protein resides in the spindle. The protein operates within protein modification; protein ubiquitination. In terms of biological role, substrate-specific adapter of a BCR (BTB-CUL3-RBX1) E3 ubiquitin-protein ligase complex required for efficient chromosome alignment and cytokinesis. The BCR(KLHL21) E3 ubiquitin ligase complex regulates localization of the chromosomal passenger complex (CPC) from chromosomes to the spindle midzone in anaphase and mediates the ubiquitination of AURKB. Ubiquitination of AURKB by BCR(KLHL21) E3 ubiquitin ligase complex may not lead to its degradation by the proteasome. The chain is Kelch-like protein 21 (Klhl21) from Mus musculus (Mouse).